Consider the following 139-residue polypeptide: Maximins 4/H3 type 6 (139 aa).

A signal peptide spans M1–A18. Positions R19–R43 are excised as a propeptide. The residue at position 70 (N70) is an Asparagine amide. A propeptide spanning residues T74–R118 is cleaved from the precursor. An Isoleucine amide modification is found at I138.

This sequence belongs to the bombinin family. As to expression, expressed by the skin glands.

The protein localises to the secreted. Functionally, maximin-4 shows antibacterial activity against both Gram-positive and Gram-negative bacteria. It also shows antimicrobial activity against the fungus C.albicans, but not against A.flavus nor P.uticale. It has little hemolytic activity. It does not possess a significant cytotoxicity against tumor cell lines. It does not possess a significant anti-HIV activity. Its function is as follows. Maximin-H3 shows antibacterial activity against both Gram-positive and Gram-negative bacteria. It also shows antimicrobial activity against the fungus C.albicans. Shows strong hemolytic activity. This Bombina maxima (Giant fire-bellied toad) protein is Maximins 4/H3 type 6.